The sequence spans 367 residues: 2,6-dihydropseudooxynicotine hydrolase (367 aa).

Residues Glu148, Ser217, Asp300, and His329 contribute to the active site.

Belongs to the AB hydrolase superfamily. In terms of assembly, homodimer.

It carries out the reaction 2,6-dihydroxypseudooxynicotine + H2O = 2,6-dihydroxypyridine + 4-(methylamino)butanoate + H(+). Its pathway is alkaloid degradation; nicotine degradation; 2,6-dihydroxypyridine and 4-(methylamino)butanoate from 6-hydroxypseudooxynicotine: step 2/2. In terms of biological role, L-nicotine is used as a growth substrate. Plays a role in nicotine catabolism by cleaving a C-C bond in 2,6-dihydroxypseudooxynicotine. This Paenarthrobacter nicotinovorans (Arthrobacter nicotinovorans) protein is 2,6-dihydropseudooxynicotine hydrolase.